Consider the following 217-residue polypeptide: CD99 antigen-like protein 2 (217 aa).

The N-terminal stretch at 1–25 (MVAWRWACLICLAFSLTTLVQRGSG) is a signal peptide. Residues 26-141 (DTGGFRLEDA…DDSGMSAETG (116 aa)) are Extracellular-facing. The tract at residues 36–136 (VEGTSSVKQR…GGDNSDDSGM (101 aa)) is disordered. Positions 50-64 (TTTTRRPGATRAPAK) are enriched in low complexity. Acidic residues predominate over residues 70–82 (AEDDFNLADALDD). Residues 83–92 (QNDRDHDRKK) are compositionally biased toward basic and acidic residues. Residue S134 is glycosylated (O-linked (Xyl...) (chondroitin sulfate) serine). Residues 142-162 (TIAGVASALAMALIGAVSSYI) form a helical membrane-spanning segment. The Cytoplasmic portion of the chain corresponds to 163–217 (SYQQKKFCFSIQQGLNADYVKGENLEAVVCEEPQVKYSALQTQSTEPPPPEPPRI).

It belongs to the CD99 family. Post-translationally, O-glycosylated.

It is found in the cell membrane. The protein localises to the cell junction. The protein resides in the secreted. In terms of biological role, plays a role in a late step of leukocyte extravasation helping cells to overcome the endothelial basement membrane. Acts at the same site as, but independently of, PECAM1. Homophilic adhesion molecule, but these interactions may not be required for cell aggregation. This Bos taurus (Bovine) protein is CD99 antigen-like protein 2 (CD99L2).